The following is a 249-amino-acid chain: Triosephosphate isomerase (249 aa).

Residue 9–11 (NWK) participates in substrate binding. The active-site Electrophile is H94. E166 acts as the Proton acceptor in catalysis. Residues G172, S211, and 232 to 233 (GG) contribute to the substrate site.

Belongs to the triosephosphate isomerase family. As to quaternary structure, homodimer.

It is found in the cytoplasm. It carries out the reaction D-glyceraldehyde 3-phosphate = dihydroxyacetone phosphate. It functions in the pathway carbohydrate biosynthesis; gluconeogenesis. The protein operates within carbohydrate degradation; glycolysis; D-glyceraldehyde 3-phosphate from glycerone phosphate: step 1/1. Its function is as follows. Involved in the gluconeogenesis. Catalyzes stereospecifically the conversion of dihydroxyacetone phosphate (DHAP) to D-glyceraldehyde-3-phosphate (G3P). In Chromohalobacter salexigens (strain ATCC BAA-138 / DSM 3043 / CIP 106854 / NCIMB 13768 / 1H11), this protein is Triosephosphate isomerase.